The chain runs to 179 residues: Ribosome maturation factor RimM (179 aa).

Residues 103-176 (EPDTYYDHQL…IVEIDPPKGL (74 aa)) enclose the PRC barrel domain.

It belongs to the RimM family. In terms of assembly, binds ribosomal protein uS19.

It localises to the cytoplasm. An accessory protein needed during the final step in the assembly of 30S ribosomal subunit, possibly for assembly of the head region. Essential for efficient processing of 16S rRNA. May be needed both before and after RbfA during the maturation of 16S rRNA. It has affinity for free ribosomal 30S subunits but not for 70S ribosomes. In Mycobacterium leprae (strain Br4923), this protein is Ribosome maturation factor RimM.